A 375-amino-acid polypeptide reads, in one-letter code: Zinc finger CCCH domain-containing protein 57 (375 aa).

5 consecutive C3H1-type zinc fingers follow at residues 42 to 70 (RHGE…HPHD), 87 to 115 (RIGQ…HPRN), 133 to 161 (RPNE…HPQT), 243 to 271 (RPGQ…HPRD), and 289 to 317 (RPGE…HPMR). The disordered stretch occupies residues 352-375 (SVEAKPTSLPETTSAKDTIVDAQH).

The protein localises to the nucleus. The protein is Zinc finger CCCH domain-containing protein 57 (ZFN3) of Arabidopsis thaliana (Mouse-ear cress).